The chain runs to 86 residues: RNA-binding protein Hfq (86 aa).

Residues 9 to 69 (DRFLNILRTS…VSTIMPESFV (61 aa)) form the Sm domain.

This sequence belongs to the Hfq family. As to quaternary structure, homohexamer.

Its function is as follows. RNA chaperone that binds small regulatory RNA (sRNAs) and mRNAs to facilitate mRNA translational regulation in response to envelope stress, environmental stress and changes in metabolite concentrations. Also binds with high specificity to tRNAs. The polypeptide is RNA-binding protein Hfq (Thermosipho melanesiensis (strain DSM 12029 / CIP 104789 / BI429)).